Reading from the N-terminus, the 184-residue chain is Thymidine kinase (184 aa).

Residues 9–16 and 82–85 contribute to the ATP site; these read AAMNSGKS and DEAQ. Residue Glu-83 is the Proton acceptor of the active site. Positions 140, 142, 177, and 180 each coordinate Zn(2+).

The protein belongs to the thymidine kinase family. In terms of assembly, homotetramer.

It localises to the cytoplasm. The enzyme catalyses thymidine + ATP = dTMP + ADP + H(+). This Chromobacterium violaceum (strain ATCC 12472 / DSM 30191 / JCM 1249 / CCUG 213 / NBRC 12614 / NCIMB 9131 / NCTC 9757 / MK) protein is Thymidine kinase.